A 922-amino-acid chain; its full sequence is Translation initiation factor IF-2 (922 aa).

The tract at residues 243–329 (AAREAAKLAE…GKSKSGQEET (87 aa)) is disordered. Residues 250-264 (LAEAQKAAAPAPAAP) show a composition bias toward low complexity. The span at 267 to 298 (KTLHKPDKPAAAKGAKGPDKKPAGAWKDDAAR) shows a compositional bias: basic and acidic residues. In terms of domain architecture, tr-type G spans 422–589 (ARPPVVTVMG…AILLQAEVLE (168 aa)). Residues 431–438 (GHVDHGKT) are G1. 431-438 (GHVDHGKT) is a binding site for GTP. Residues 456-460 (GITQH) form a G2 region. A G3 region spans residues 477 to 480 (DTPG). GTP-binding positions include 477 to 481 (DTPGH) and 531 to 534 (NKID). Residues 531 to 534 (NKID) form a G4 region. The interval 567 to 569 (SAK) is G5.

This sequence belongs to the TRAFAC class translation factor GTPase superfamily. Classic translation factor GTPase family. IF-2 subfamily.

Its subcellular location is the cytoplasm. Functionally, one of the essential components for the initiation of protein synthesis. Protects formylmethionyl-tRNA from spontaneous hydrolysis and promotes its binding to the 30S ribosomal subunits. Also involved in the hydrolysis of GTP during the formation of the 70S ribosomal complex. The chain is Translation initiation factor IF-2 from Thiobacillus denitrificans (strain ATCC 25259 / T1).